Here is a 332-residue protein sequence, read N- to C-terminus: Glycerol-3-phosphate dehydrogenase [NAD(P)+] (332 aa).

S11, F12, K32, and K106 together coordinate NADPH. Positions 106, 137, and 139 each coordinate sn-glycerol 3-phosphate. A141 is an NADPH binding site. Sn-glycerol 3-phosphate-binding residues include K192, D245, S255, R256, and N257. The active-site Proton acceptor is the K192. NADPH is bound at residue R256. Positions 280 and 282 each coordinate NADPH.

The protein belongs to the NAD-dependent glycerol-3-phosphate dehydrogenase family.

The protein resides in the cytoplasm. It carries out the reaction sn-glycerol 3-phosphate + NAD(+) = dihydroxyacetone phosphate + NADH + H(+). The enzyme catalyses sn-glycerol 3-phosphate + NADP(+) = dihydroxyacetone phosphate + NADPH + H(+). It participates in membrane lipid metabolism; glycerophospholipid metabolism. In terms of biological role, catalyzes the reduction of the glycolytic intermediate dihydroxyacetone phosphate (DHAP) to sn-glycerol 3-phosphate (G3P), the key precursor for phospholipid synthesis. In Staphylococcus saprophyticus subsp. saprophyticus (strain ATCC 15305 / DSM 20229 / NCIMB 8711 / NCTC 7292 / S-41), this protein is Glycerol-3-phosphate dehydrogenase [NAD(P)+].